Consider the following 320-residue polypeptide: Phospho-N-acetylmuramoyl-pentapeptide-transferase (320 aa).

Transmembrane regions (helical) follow at residues phenylalanine 5–phenylalanine 25, methionine 51–tyrosine 71, isoleucine 75–glycine 95, leucine 121–isoleucine 141, phenylalanine 143–glycine 163, glycine 176–valine 196, asparagine 198–phenylalanine 218, isoleucine 241–isoleucine 261, and isoleucine 300–serine 320.

Belongs to the glycosyltransferase 4 family. MraY subfamily. Mg(2+) serves as cofactor.

The protein localises to the cell membrane. The enzyme catalyses UDP-N-acetyl-alpha-D-muramoyl-L-alanyl-gamma-D-glutamyl-L-lysyl-D-alanyl-D-alanine + di-trans,octa-cis-undecaprenyl phosphate = Mur2Ac(oyl-L-Ala-gamma-D-Glu-L-Lys-D-Ala-D-Ala)-di-trans,octa-cis-undecaprenyl diphosphate + UMP. It functions in the pathway cell wall biogenesis; peptidoglycan biosynthesis. Catalyzes the initial step of the lipid cycle reactions in the biosynthesis of the cell wall peptidoglycan: transfers peptidoglycan precursor phospho-MurNAc-pentapeptide from UDP-MurNAc-pentapeptide onto the lipid carrier undecaprenyl phosphate, yielding undecaprenyl-pyrophosphoryl-MurNAc-pentapeptide, known as lipid I. This is Phospho-N-acetylmuramoyl-pentapeptide-transferase from Leuconostoc mesenteroides subsp. mesenteroides (strain ATCC 8293 / DSM 20343 / BCRC 11652 / CCM 1803 / JCM 6124 / NCDO 523 / NBRC 100496 / NCIMB 8023 / NCTC 12954 / NRRL B-1118 / 37Y).